A 387-amino-acid polypeptide reads, in one-letter code: NifS-like protein (387 aa).

Pyridoxal 5'-phosphate contacts are provided by residues 58 to 59 (SE) and 184 to 186 (SIN).

The protein belongs to the class-V pyridoxal-phosphate-dependent aminotransferase family. NifS/IscS subfamily. It depends on pyridoxal 5'-phosphate as a cofactor.

It localises to the virion. The protein is NifS-like protein of African swine fever virus (isolate Tick/South Africa/Pretoriuskop Pr4/1996) (ASFV).